Consider the following 200-residue polypeptide: Pyrrolidone-carboxylate peptidase (200 aa).

Catalysis depends on residues E79, C142, and H166.

Belongs to the peptidase C15 family. In terms of assembly, homotetramer.

It localises to the cytoplasm. It carries out the reaction Release of an N-terminal pyroglutamyl group from a polypeptide, the second amino acid generally not being Pro.. In terms of biological role, removes 5-oxoproline from various penultimate amino acid residues except L-proline. This chain is Pyrrolidone-carboxylate peptidase (pcp), found in Pyrococcus abyssi (strain GE5 / Orsay).